A 172-amino-acid polypeptide reads, in one-letter code: 3-hydroxydecanoyl-[acyl-carrier-protein] dehydratase (172 aa).

The active site involves H71.

Belongs to the thioester dehydratase family. FabA subfamily. In terms of assembly, homodimer.

It localises to the cytoplasm. The catalysed reaction is a (3R)-hydroxyacyl-[ACP] = a (2E)-enoyl-[ACP] + H2O. It carries out the reaction (3R)-hydroxydecanoyl-[ACP] = (2E)-decenoyl-[ACP] + H2O. The enzyme catalyses (2E)-decenoyl-[ACP] = (3Z)-decenoyl-[ACP]. Its pathway is lipid metabolism; fatty acid biosynthesis. In terms of biological role, necessary for the introduction of cis unsaturation into fatty acids. Catalyzes the dehydration of (3R)-3-hydroxydecanoyl-ACP to E-(2)-decenoyl-ACP and then its isomerization to Z-(3)-decenoyl-ACP. Can catalyze the dehydratase reaction for beta-hydroxyacyl-ACPs with saturated chain lengths up to 16:0, being most active on intermediate chain length. The polypeptide is 3-hydroxydecanoyl-[acyl-carrier-protein] dehydratase (Sodalis glossinidius (strain morsitans)).